Reading from the N-terminus, the 223-residue chain is Ribosomal RNA small subunit methyltransferase G (223 aa).

S-adenosyl-L-methionine-binding positions include Gly82, Leu87, 133 to 134 (AE), and Arg151.

It belongs to the methyltransferase superfamily. RNA methyltransferase RsmG family.

Its subcellular location is the cytoplasm. Functionally, specifically methylates the N7 position of guanine in position 518 of 16S rRNA. This Corynebacterium glutamicum (strain ATCC 13032 / DSM 20300 / JCM 1318 / BCRC 11384 / CCUG 27702 / LMG 3730 / NBRC 12168 / NCIMB 10025 / NRRL B-2784 / 534) protein is Ribosomal RNA small subunit methyltransferase G.